The following is a 247-amino-acid chain: Flavin-dependent thymidylate synthase (247 aa).

In terms of domain architecture, ThyX spans 1 to 237; that stretch reads MDVKLLEATD…PKTFEYYEQE (237 aa). DUMP contacts are provided by residues 85-88, 98-100, and R176; these read QITR and SMR. FAD is bound at residue 88 to 90; sequence RHR. The ThyX motif motif lies at 88–98; sequence RHRHVSFDVQS. FAD-binding positions include 192 to 194 and H198; that span reads NAR. R203 serves as a coordination point for dUMP. The Involved in ionization of N3 of dUMP, leading to its activation role is filled by R203.

Belongs to the thymidylate synthase ThyX family. Homotetramer. It depends on FAD as a cofactor.

The catalysed reaction is dUMP + (6R)-5,10-methylene-5,6,7,8-tetrahydrofolate + NADPH + H(+) = dTMP + (6S)-5,6,7,8-tetrahydrofolate + NADP(+). The protein operates within pyrimidine metabolism; dTTP biosynthesis. In terms of biological role, catalyzes the reductive methylation of 2'-deoxyuridine-5'-monophosphate (dUMP) to 2'-deoxythymidine-5'-monophosphate (dTMP) while utilizing 5,10-methylenetetrahydrofolate (mTHF) as the methyl donor, and NADPH and FADH(2) as the reductant. This is Flavin-dependent thymidylate synthase from Haloarcula marismortui (strain ATCC 43049 / DSM 3752 / JCM 8966 / VKM B-1809) (Halobacterium marismortui).